The sequence spans 599 residues: Elongation factor 4 (599 aa).

Positions 2–184 (KNIRNFSIIA…RLVRDIPPPE (183 aa)) constitute a tr-type G domain. GTP-binding positions include 14 to 19 (DHGKST) and 131 to 134 (NKID).

The protein belongs to the TRAFAC class translation factor GTPase superfamily. Classic translation factor GTPase family. LepA subfamily.

It is found in the cell inner membrane. The enzyme catalyses GTP + H2O = GDP + phosphate + H(+). In terms of biological role, required for accurate and efficient protein synthesis under certain stress conditions. May act as a fidelity factor of the translation reaction, by catalyzing a one-codon backward translocation of tRNAs on improperly translocated ribosomes. Back-translocation proceeds from a post-translocation (POST) complex to a pre-translocation (PRE) complex, thus giving elongation factor G a second chance to translocate the tRNAs correctly. Binds to ribosomes in a GTP-dependent manner. This Klebsiella pneumoniae subsp. pneumoniae (strain ATCC 700721 / MGH 78578) protein is Elongation factor 4.